We begin with the raw amino-acid sequence, 284 residues long: Polyamine aminopropyltransferase (284 aa).

Positions 2-237 constitute a PABS domain; that stretch reads ELWYTEQHTE…GHWLFGFASK (236 aa). Residue glutamine 31 participates in S-methyl-5'-thioadenosine binding. 2 residues coordinate spermidine: histidine 62 and aspartate 86. S-methyl-5'-thioadenosine is bound by residues glutamate 106 and 137–138; that span reads DG. The active-site Proton acceptor is aspartate 155. A spermidine-binding site is contributed by 155–158; it reads DSTD. An S-methyl-5'-thioadenosine-binding site is contributed by proline 162.

The protein belongs to the spermidine/spermine synthase family. Homodimer or homotetramer.

It is found in the cytoplasm. The catalysed reaction is S-adenosyl 3-(methylsulfanyl)propylamine + putrescine = S-methyl-5'-thioadenosine + spermidine + H(+). The protein operates within amine and polyamine biosynthesis; spermidine biosynthesis; spermidine from putrescine: step 1/1. Catalyzes the irreversible transfer of a propylamine group from the amino donor S-adenosylmethioninamine (decarboxy-AdoMet) to putrescine (1,4-diaminobutane) to yield spermidine. This Clostridium beijerinckii (strain ATCC 51743 / NCIMB 8052) (Clostridium acetobutylicum) protein is Polyamine aminopropyltransferase.